The following is a 27-amino-acid chain: Phospholipase A2 1 (27 aa).

This sequence belongs to the phospholipase A2 family. Group I subfamily. The cofactor is Ca(2+). Expressed by the venom gland.

The protein resides in the secreted. It catalyses the reaction a 1,2-diacyl-sn-glycero-3-phosphocholine + H2O = a 1-acyl-sn-glycero-3-phosphocholine + a fatty acid + H(+). Functionally, snake venom phospholipase A2 (PLA2) that inhibits neuromuscular transmission by blocking acetylcholine release from the nerve termini. PLA2 catalyzes the calcium-dependent hydrolysis of the 2-acyl groups in 3-sn-phosphoglycerides. The sequence is that of Phospholipase A2 1 from Micrurus nigrocinctus (Central American coral snake).